Here is a 77-residue protein sequence, read N- to C-terminus: Pi/alpha-stichotoxin-Hmg5b (77 aa).

The first 21 residues, 1–21 (MDYQRLLFLFAVAMVITTTVA), serve as a signal peptide directing secretion. The propeptide occupies 22 to 34 (LPKDTALMDGQLQ). Disulfide bonds link Cys-40–Cys-73, Cys-42–Cys-66, and Cys-56–Cys-74. Met-52 carries the post-translational modification Methionine sulfoxide; partial.

Belongs to the sea anemone type 3 (BDS) potassium channel toxin family. Toxin occurs in two forms in the mucus, Hmg 1b-2 which is not oxidized and Hmg 1b-2 MetOx which is oxidized at Met-52.

The protein resides in the secreted. It is found in the nematocyst. The non-oxidized toxin is remarkably non-selective with activity on many different ion channels. Weakly and reversibly inhibits rat and human homomeric ASIC1 (isoform ASIC1a) (IC(50)=4.8 uM, and IC(50)=14.6 uM), and ASIC3 (IC(50)=15.9 uM). Molecular modeling interaction with ASIC1a suggests that this peptide hinders the collapse of acidic pockets and stabilizes nonconducting channels state. It activates several potassium channels including Kv1.1/KCNA1, Kv1.2/KCNA2, and drosophila Shaker IR. It moderately to potently inhibits potassium channels including Kv1.3/KCNA3, Kv1.4/KCNA4, Kv1.5/KCNA5, Kv1.6/KCNA6, Kv2.1/KCNB1, Kv4.2/KCND2, Kv7.1/KCNQ1, Kv7.2/Kv7.3 (KCNQ2/KCNQ3), Kv7.4/KCNQ4, hERG/KCNH2, and C.elegans QKT1. On sodium channels, it moderately to potently inhibits Nav1.1/SCN1A, Nav1.2/SCN2A, Nav1.3/SCN3A, Nav1.4/SCN4A, Nav1.5/SCN5A, Nav1.6/SCN8A, Nav1.7/SCN9A, Nav1.8/SCN10A, and B.germanica BgNav. It also moderately to potently inhibits Cav3.1/CACNA1G, Cav3.2/CACNA1H, and Cav3.3/CACNA1I. Significant shifts in the voltage-current relationship are observed on Kv and Nav, depending on the channel isoform, whereas the toxin does not seem to modulate the voltage-sensor domains of Cav channels, acting mainly as a pore blocker. Does not activate nicotinic acetylcholine receptors (nAChR), but potentiates ACh-elicited current of human alpha-7/CHRNA7 nAChR. Is also able to bind T.californica muscle-type nAChRs. In vivo, causes an excitatory effect in mice behavior. Also shows antihyperalgesic and analgesic activity in the acid-induced muscle pain mice model, and weak anti-inflammatory effect in models of acute local inflammation. Its function is as follows. Forms an oxidized toxin derivative (Hmg 1b-2 MetOx). Able to bind T.californica muscle-type nAChRs (alpha-1-beta-1-delta-epsilon (CHRNA1-CHRNB1-CHRND-CHRNE)). This chain is Pi/alpha-stichotoxin-Hmg5b, found in Heteractis magnifica (Magnificent sea anemone).